A 637-amino-acid polypeptide reads, in one-letter code: Serine/threonine protein kinase ypkA (637 aa).

The segment covering 20–29 (TFTRSSSTST) has biased composition (low complexity). Disordered regions lie at residues 20–63 (TFTR…SLVS) and 104–140 (SSSV…INAA). Residues 40–61 (VVSQTPSISSTNSNGINASESL) are compositionally biased toward polar residues. Over residues 104–116 (SSSVRPSSSSSHS) the composition is skewed to low complexity. The span at 117–136 (THGQTASFAQSGRPQSTSGG) shows a compositional bias: polar residues. In terms of domain architecture, Protein kinase spans 294 to 551 (FDLLKVVGKG…AAEIKSHHFF (258 aa)). ATP contacts are provided by residues 300–308 (VGKGSFGKV) and Lys323. The Proton acceptor role is filled by Asp417. The AGC-kinase C-terminal domain occupies 552–623 (ANIDWRKLLQ…NRPVAGLGDA (72 aa)). A phosphoserine mark is found at Ser593 and Ser612. Tyr613 carries the phosphotyrosine modification.

The protein belongs to the protein kinase superfamily. Ser/Thr protein kinase family. As to quaternary structure, interacts with the sakA MAP kinase.

It catalyses the reaction L-seryl-[protein] + ATP = O-phospho-L-seryl-[protein] + ADP + H(+). The enzyme catalyses L-threonyl-[protein] + ATP = O-phospho-L-threonyl-[protein] + ADP + H(+). Its function is as follows. Serine/threonine protein kinase required for vegetative growth and conidiation. Important for fungal survival through the regulation of glycosphingolipid (GSL) biosynthesis and cross talks with MAP kinase pathways such as the cell wall integrity (CWI) and the high osmolarity glycerol (HOG) pathways. The polypeptide is Serine/threonine protein kinase ypkA (Aspergillus fumigatus (strain ATCC MYA-4609 / CBS 101355 / FGSC A1100 / Af293) (Neosartorya fumigata)).